A 306-amino-acid polypeptide reads, in one-letter code: uncharacterized protein (306 aa).

This is an uncharacterized protein from Saccharomyces cerevisiae (strain ATCC 204508 / S288c) (Baker's yeast).